A 287-amino-acid chain; its full sequence is Protease HtpX (287 aa).

Helical transmembrane passes span 4–24 (IFLLIATNMAILLVASIVMSI) and 33–53 (GGLLVFAAIFGFGGAFISLAI). Zn(2+) is bound at residue His139. Residue Glu140 is part of the active site. Position 143 (His143) interacts with Zn(2+). The next 2 membrane-spanning stretches (helical) occupy residues 154-174 (LIQGVVNTFVIFAARVVAGII) and 195-215 (AVVFVLDMLFGILASIIVAYF). Glu220 lines the Zn(2+) pocket.

The protein belongs to the peptidase M48B family. Requires Zn(2+) as cofactor.

It is found in the cell inner membrane. The chain is Protease HtpX from Shewanella halifaxensis (strain HAW-EB4).